We begin with the raw amino-acid sequence, 115 residues long: Non-specific lipid-transfer protein Cw18 (115 aa).

Residues M1–A25 form the signal peptide. Cystine bridges form between C29–C77, C39–C54, C55–C97, and C75–C111.

This sequence belongs to the plant LTP family. In terms of tissue distribution, highly expressed in leaves and coleoptiles. No expression in roots.

Functionally, plant non-specific lipid-transfer proteins transfer phospholipids as well as galactolipids across membranes. May play a role in wax or cutin deposition in the cell walls of expanding epidermal cells and certain secretory tissues. In Hordeum vulgare (Barley), this protein is Non-specific lipid-transfer protein Cw18 (CW18).